We begin with the raw amino-acid sequence, 208 residues long: NAD(P)H-quinone oxidoreductase subunit I (208 aa).

2 4Fe-4S ferredoxin-type domains span residues 55–84 and 95–124; these read GRIH…VDWV and RNYS…MTEE. The [4Fe-4S] cluster site is built by Cys64, Cys67, Cys70, Cys74, Cys104, Cys107, Cys110, and Cys114.

It belongs to the complex I 23 kDa subunit family. As to quaternary structure, NDH-1 is composed of at least 11 different subunits. Requires [4Fe-4S] cluster as cofactor.

The protein resides in the cellular thylakoid membrane. It carries out the reaction a plastoquinone + NADH + (n+1) H(+)(in) = a plastoquinol + NAD(+) + n H(+)(out). The enzyme catalyses a plastoquinone + NADPH + (n+1) H(+)(in) = a plastoquinol + NADP(+) + n H(+)(out). NDH-1 shuttles electrons from an unknown electron donor, via FMN and iron-sulfur (Fe-S) centers, to quinones in the respiratory and/or the photosynthetic chain. The immediate electron acceptor for the enzyme in this species is believed to be plastoquinone. Couples the redox reaction to proton translocation, and thus conserves the redox energy in a proton gradient. The chain is NAD(P)H-quinone oxidoreductase subunit I from Prochlorococcus marinus (strain MIT 9215).